Here is a 783-residue protein sequence, read N- to C-terminus: MKILLYIAIILSFFSLITISSECKIAVLLSGSPNDLGYNYLMNEARVKAESELKLDFSIYYENLEESMEEAEKAFQDALHKGANLIVVGSFVHVGLGLKYAALTKDQDIYWIIRGNKRPNPDLPHVVILNFNSFELHYLLGYFSGLMTKTGIVGFVAPGPDVNTISTDNSFYLGAKYARPNITFLNVYVQSWYNPNVSYSAAKMLIKNGADLIGMSQDDMSCQKAMMDSGLIGIGATGYPTHLLFGGNVGVSYITNWTNLYVKYAQHVLNDDWPDYSSYFTNLSREDSIFIDDYSYKVPIDIQNLVNDEIQRLKNTSYIPYRSDPYLAQLGIPFDSKGLLVEDQFRANKKLLKGDSISKVIDFGQYSIPIEFIDYPNSLKYGVTIVSGVCIFICLVCMTLVVVFKKARVIKSSSPAFLLLILLGCCIIFAACILFAQSPTNQTCSARIWLLSLGYTLFLGNLLVKNWRIWLLFDNPKLKKRAITNWKLYPWVFAILAIDVMILAIWQGLGNINAESRIGYDSLTQYQYKNVCSSDDQGSIALYLLLVFHGLVLLVACFISFKIKVVDIEEFNESKPITTSVYIITFCLFIVIPLMVSPQSLTSQTTIICVCAIVTTLISMLLLFGSKFYKMATQGLAINETFATSTKSSSKSSKSSYGKDNPNPNAINFGEDDTSDETSEEKHKSPKQKSVNFSNKSNSHLAVFTSDEETSKTSKLSIDFENSSKDISIDQLQQQKQQPINTNGDLENKSNDKIDDDNDNSSVLSKRISNQQNGETEIDSNNV.

The signal sequence occupies residues 1–20 (MKILLYIAIILSFFSLITIS). Topologically, residues 21–383 (SECKIAVLLS…DYPNSLKYGV (363 aa)) are extracellular. The stretch at 56–85 (DFSIYYENLEESMEEAEKAFQDALHKGANL) forms a coiled coil. Residues Asn-181, Asn-196, Asn-256, Asn-282, and Asn-315 are each glycosylated (N-linked (GlcNAc...) asparagine). Residues 384-404 (TIVSGVCIFICLVCMTLVVVF) form a helical membrane-spanning segment. At 405–415 (KKARVIKSSSP) the chain is on the cytoplasmic side. Residues 416–436 (AFLLLILLGCCIIFAACILFA) traverse the membrane as a helical segment. Topologically, residues 437 to 443 (QSPTNQT) are extracellular. A glycan (N-linked (GlcNAc...) asparagine) is linked at Asn-441. A helical transmembrane segment spans residues 444–464 (CSARIWLLSLGYTLFLGNLLV). Topologically, residues 465–489 (KNWRIWLLFDNPKLKKRAITNWKLY) are cytoplasmic. The helical transmembrane segment at 490–510 (PWVFAILAIDVMILAIWQGLG) threads the bilayer. Over 511–538 (NINAESRIGYDSLTQYQYKNVCSSDDQG) the chain is Extracellular. Residues 539 to 559 (SIALYLLLVFHGLVLLVACFI) form a helical membrane-spanning segment. The Cytoplasmic segment spans residues 560–575 (SFKIKVVDIEEFNESK). The helical transmembrane segment at 576 to 596 (PITTSVYIITFCLFIVIPLMV) threads the bilayer. Over 597–604 (SPQSLTSQ) the chain is Extracellular. The helical transmembrane segment at 605–625 (TTIICVCAIVTTLISMLLLFG) threads the bilayer. Over 626 to 783 (SKFYKMATQG…GETEIDSNNV (158 aa)) the chain is Cytoplasmic. The segment covering 647–656 (KSSSKSSKSS) has biased composition (low complexity). Disordered regions lie at residues 647-696 (KSSS…FSNK) and 731-783 (QLQQ…SNNV). Residues 670–679 (GEDDTSDETS) show a composition bias toward acidic residues. The segment covering 763 to 783 (VLSKRISNQQNGETEIDSNNV) has biased composition (polar residues).

In the N-terminal section; belongs to the BMP lipoprotein family. The protein in the C-terminal section; belongs to the G-protein coupled receptor 3 family. GABA-B receptor subfamily.

Its subcellular location is the cell membrane. The protein resides in the membrane. It localises to the endoplasmic reticulum membrane. It is found in the golgi apparatus membrane. The protein localises to the nucleus envelope. Its function is as follows. May act during the development and be a negative regulator. The protein is Metabotropic glutamate receptor-like protein J (grlJ) of Dictyostelium discoideum (Social amoeba).